Reading from the N-terminus, the 745-residue chain is Fatty acid oxidation complex subunit alpha (745 aa).

The enoyl-CoA hydratase stretch occupies residues 47–209; it reads VNTLKAKFAE…KMGLVDDVVP (163 aa). The 3-hydroxyacyl-CoA dehydrogenase stretch occupies residues 325–745; the sequence is RAIHRVGVLG…LDEAAITAHN (421 aa).

This sequence in the N-terminal section; belongs to the enoyl-CoA hydratase/isomerase family. In the central section; belongs to the 3-hydroxyacyl-CoA dehydrogenase family. In terms of assembly, heterotetramer of two alpha chains (FadJ) and two beta chains (FadI).

Its subcellular location is the cytoplasm. The catalysed reaction is a (3S)-3-hydroxyacyl-CoA = a (2E)-enoyl-CoA + H2O. It carries out the reaction a 4-saturated-(3S)-3-hydroxyacyl-CoA = a (3E)-enoyl-CoA + H2O. The enzyme catalyses a (3S)-3-hydroxyacyl-CoA + NAD(+) = a 3-oxoacyl-CoA + NADH + H(+). It catalyses the reaction (3S)-3-hydroxybutanoyl-CoA = (3R)-3-hydroxybutanoyl-CoA. It participates in lipid metabolism; fatty acid beta-oxidation. In terms of biological role, catalyzes the formation of a hydroxyacyl-CoA by addition of water on enoyl-CoA. Also exhibits 3-hydroxyacyl-CoA epimerase and 3-hydroxyacyl-CoA dehydrogenase activities. The chain is Fatty acid oxidation complex subunit alpha from Yersinia enterocolitica serotype O:8 / biotype 1B (strain NCTC 13174 / 8081).